The following is a 497-amino-acid chain: Serine hydroxymethyltransferase (497 aa).

(6S)-5,6,7,8-tetrahydrofolate contacts are provided by residues Leu-176 and 180-182 (GHL). Lys-289 carries the post-translational modification N6-(pyridoxal phosphate)lysine.

It belongs to the SHMT family. In terms of assembly, homodimer. The cofactor is pyridoxal 5'-phosphate.

It is found in the cytoplasm. It carries out the reaction (6R)-5,10-methylene-5,6,7,8-tetrahydrofolate + glycine + H2O = (6S)-5,6,7,8-tetrahydrofolate + L-serine. The protein operates within one-carbon metabolism; tetrahydrofolate interconversion. Its pathway is amino-acid biosynthesis; glycine biosynthesis; glycine from L-serine: step 1/1. Functionally, catalyzes the reversible interconversion of serine and glycine with tetrahydrofolate (THF) serving as the one-carbon carrier. This reaction serves as the major source of one-carbon groups required for the biosynthesis of purines, thymidylate, methionine, and other important biomolecules. Also exhibits THF-independent aldolase activity toward beta-hydroxyamino acids, producing glycine and aldehydes, via a retro-aldol mechanism. The polypeptide is Serine hydroxymethyltransferase (Chlamydia muridarum (strain MoPn / Nigg)).